We begin with the raw amino-acid sequence, 327 residues long: Endo-1,4-beta-xylanase C (327 aa).

Residues 1-15 (MKFSSLLFTASLVAA) form the signal peptide. In terms of domain architecture, GH10 spans 43-325 (TITDPNLLQS…KPAYTAVVNA (283 aa)). The active-site Proton donor is E154. Catalysis depends on E262, which acts as the Nucleophile. An intrachain disulfide couples C280 to C286.

The protein belongs to the glycosyl hydrolase 10 (cellulase F) family.

Its subcellular location is the secreted. The catalysed reaction is Endohydrolysis of (1-&gt;4)-beta-D-xylosidic linkages in xylans.. It participates in glycan degradation; xylan degradation. Its activity is regulated as follows. Weakly inhibited by the wheat xylanase inhibiting protein I (XIP-I). Endo-1,4-beta-xylanase involved in the hydrolysis of xylan, a major structural heterogeneous polysaccharide found in plant biomass representing the second most abundant polysaccharide in the biosphere, after cellulose. Plays an important role in causing fusarium head blight (FHB) on cereal crops. The sequence is that of Endo-1,4-beta-xylanase C (XYLC) from Gibberella zeae (strain ATCC MYA-4620 / CBS 123657 / FGSC 9075 / NRRL 31084 / PH-1) (Wheat head blight fungus).